Here is a 354-residue protein sequence, read N- to C-terminus: Peptide chain release factor 1 (354 aa).

Gln-230 is modified (N5-methylglutamine).

It belongs to the prokaryotic/mitochondrial release factor family. Methylated by PrmC. Methylation increases the termination efficiency of RF1.

It is found in the cytoplasm. In terms of biological role, peptide chain release factor 1 directs the termination of translation in response to the peptide chain termination codons UAG and UAA. This Thermus thermophilus (strain ATCC BAA-163 / DSM 7039 / HB27) protein is Peptide chain release factor 1.